The chain runs to 298 residues: Nucleotide-binding protein MLBr00563 (298 aa).

An ATP-binding site is contributed by 21-28 (GLSGAGRG). Position 72–75 (72–75 (DVRS)) interacts with GTP.

It belongs to the RapZ-like family.

Its function is as follows. Displays ATPase and GTPase activities. In Mycobacterium leprae (strain Br4923), this protein is Nucleotide-binding protein MLBr00563.